The sequence spans 280 residues: Putative transcription factor kapC (280 aa).

Positions 1-102 (MQPALAPHPS…GKRPLSTSKR (102 aa)) are disordered. Over residues 39-49 (PQPPAPQPPHM) the composition is skewed to pro residues. Polar residues predominate over residues 79-89 (TQPDVTGQETP). The region spanning 96–159 (PLSTSKRAAQ…EYIINLQSRL (64 aa)) is the bZIP domain. Residues 97–120 (LSTSKRAAQNRAAQRAFRQRKEAH) form a basic motif region. Residues 124-155 (LEGKVKAYESMGEAIKALQAENYQLREYIINL) form a leucine-zipper region. Residues 169 to 280 (LPGNIDLSQP…EQTHGLPLIS (112 aa)) are disordered. The segment covering 197–206 (APPPTAPQQP) has biased composition (pro residues).

This sequence belongs to the bZIP family.

It is found in the nucleus. Putative transcription factor. The chain is Putative transcription factor kapC (kapC) from Aspergillus fumigatus (strain ATCC MYA-4609 / CBS 101355 / FGSC A1100 / Af293) (Neosartorya fumigata).